The sequence spans 402 residues: Multidrug resistance protein MdtH (402 aa).

Over 1 to 12 the chain is Cytoplasmic; the sequence is MSRVSQARNLGK. A helical membrane pass occupies residues 13–33; the sequence is YFLLIDNMLVVLGFFVVFPLI. Residues 34–98 lie on the Periplasmic side of the membrane; the sequence is SIRFVDQMGW…GFATMGIAHE (65 aa). Residues 99-116 form a helical membrane-spanning segment; that stretch reads PWLLWFSCLLSGLGGTLF. Over 117 to 138 the chain is Cytoplasmic; it reads DPPRSALVVKLIRPQQRGRFFS. The helical transmembrane segment at 139 to 159 threads the bilayer; sequence LLMMQDSAGAVIGALLGSWLL. At 160–164 the chain is on the periplasmic side; it reads QYDFR. Residues 165 to 185 form a helical membrane-spanning segment; it reads LVCATGAVLFVLCAAFNAWLL. The Cytoplasmic portion of the chain corresponds to 186-213; that stretch reads PAWKLSTVRTPVREGMTRVMRDKRFVTY. Residues 214 to 234 form a helical membrane-spanning segment; it reads VLTLAGYYMLAVQVMLMLPIM. The Periplasmic portion of the chain corresponds to 235 to 243; the sequence is VNDVAGAPS. A helical membrane pass occupies residues 244–264; that stretch reads AVKWMYAIEACLSLTLLYPIA. Residues 265–276 are Cytoplasmic-facing; it reads RWSEKHFRLEHR. Residues 277–297 form a helical membrane-spanning segment; that stretch reads LMAGLLIMSLSMMPVGMVSGL. Residues 298-299 are Periplasmic-facing; that stretch reads QQ. Residues 300-320 traverse the membrane as a helical segment; that stretch reads LFTLICLFYIGSIIAEPARET. Topologically, residues 321–339 are cytoplasmic; it reads LSASLADARARGSYMGFSR. The helical transmembrane segment at 340–360 threads the bilayer; it reads LGLAIGGAIGYIGGGWLFDLG. Residues 361–367 lie on the Periplasmic side of the membrane; the sequence is KSAHQPE. Residues 368–388 traverse the membrane as a helical segment; it reads LPWMMLGIIGIFTFLALGWQF. Residues 389-402 are Cytoplasmic-facing; it reads SQKRAARRLLERDA.

The protein belongs to the major facilitator superfamily. DHA1 family. MdtH (TC 2.A.1.2.21) subfamily.

The protein localises to the cell inner membrane. Confers resistance to norfloxacin and enoxacin. In Escherichia coli O139:H28 (strain E24377A / ETEC), this protein is Multidrug resistance protein MdtH.